Reading from the N-terminus, the 104-residue chain is uncharacterized protein (104 aa).

This is an uncharacterized protein from Mycoplasma genitalium (strain ATCC 33530 / DSM 19775 / NCTC 10195 / G37) (Mycoplasmoides genitalium).